We begin with the raw amino-acid sequence, 476 residues long: Aspartyl/glutamyl-tRNA(Asn/Gln) amidotransferase subunit B (476 aa).

Belongs to the GatB/GatE family. GatB subfamily. As to quaternary structure, heterotrimer of A, B and C subunits.

It catalyses the reaction L-glutamyl-tRNA(Gln) + L-glutamine + ATP + H2O = L-glutaminyl-tRNA(Gln) + L-glutamate + ADP + phosphate + H(+). The catalysed reaction is L-aspartyl-tRNA(Asn) + L-glutamine + ATP + H2O = L-asparaginyl-tRNA(Asn) + L-glutamate + ADP + phosphate + 2 H(+). Functionally, allows the formation of correctly charged Asn-tRNA(Asn) or Gln-tRNA(Gln) through the transamidation of misacylated Asp-tRNA(Asn) or Glu-tRNA(Gln) in organisms which lack either or both of asparaginyl-tRNA or glutaminyl-tRNA synthetases. The reaction takes place in the presence of glutamine and ATP through an activated phospho-Asp-tRNA(Asn) or phospho-Glu-tRNA(Gln). The protein is Aspartyl/glutamyl-tRNA(Asn/Gln) amidotransferase subunit B of Nitratidesulfovibrio vulgaris (strain ATCC 29579 / DSM 644 / CCUG 34227 / NCIMB 8303 / VKM B-1760 / Hildenborough) (Desulfovibrio vulgaris).